Consider the following 561-residue polypeptide: Arginine--tRNA ligase (561 aa).

The short motif at 129–139 (ANPTGPLHVGH) is the 'HIGH' region element.

The protein belongs to the class-I aminoacyl-tRNA synthetase family. As to quaternary structure, monomer.

The protein localises to the cytoplasm. It catalyses the reaction tRNA(Arg) + L-arginine + ATP = L-arginyl-tRNA(Arg) + AMP + diphosphate. This is Arginine--tRNA ligase from Bordetella petrii (strain ATCC BAA-461 / DSM 12804 / CCUG 43448).